Here is a 410-residue protein sequence, read N- to C-terminus: Peptidase T (410 aa).

His-79 contributes to the Zn(2+) binding site. The active site involves Asp-81. Residue Asp-142 participates in Zn(2+) binding. Glu-176 serves as the catalytic Proton acceptor. Zn(2+)-binding residues include Glu-177, Asp-199, and His-381.

Belongs to the peptidase M20B family. Requires Zn(2+) as cofactor.

Its subcellular location is the cytoplasm. It carries out the reaction Release of the N-terminal residue from a tripeptide.. In terms of biological role, cleaves the N-terminal amino acid of tripeptides. The protein is Peptidase T of Bacillus velezensis (strain DSM 23117 / BGSC 10A6 / LMG 26770 / FZB42) (Bacillus amyloliquefaciens subsp. plantarum).